Here is a 205-residue protein sequence, read N- to C-terminus: Transcriptional regulator GfcR (205 aa).

It belongs to the purine/pyrimidine phosphoribosyltransferase family. GfcR subfamily.

This chain is Transcriptional regulator GfcR, found in Methanococcus vannielii (strain ATCC 35089 / DSM 1224 / JCM 13029 / OCM 148 / SB).